We begin with the raw amino-acid sequence, 442 residues long: FBD-associated F-box protein At1g66310 (442 aa).

Residues 18-64 enclose the F-box domain; it reads VDWLRDLPESLLCHILLNLPTKDVVKTSVLSSKWRNLWRLVPGLDLD. In terms of domain architecture, FBD spans 363 to 415; sequence KRRTSVLSGPRRLLSSLEYVEIESPLTGEVFEMKLVSYLLENSPILKKLTINL.

This Arabidopsis thaliana (Mouse-ear cress) protein is FBD-associated F-box protein At1g66310.